A 297-amino-acid chain; its full sequence is Lipoyl synthase (297 aa).

7 residues coordinate [4Fe-4S] cluster: Cys37, Cys42, Cys48, Cys63, Cys67, Cys70, and Ser276. Residues 49 to 265 (WSRKHATVMI…ERIAKTKGFL (217 aa)) form the Radical SAM core domain.

Belongs to the radical SAM superfamily. Lipoyl synthase family. The cofactor is [4Fe-4S] cluster.

Its subcellular location is the cytoplasm. The catalysed reaction is [[Fe-S] cluster scaffold protein carrying a second [4Fe-4S](2+) cluster] + N(6)-octanoyl-L-lysyl-[protein] + 2 oxidized [2Fe-2S]-[ferredoxin] + 2 S-adenosyl-L-methionine + 4 H(+) = [[Fe-S] cluster scaffold protein] + N(6)-[(R)-dihydrolipoyl]-L-lysyl-[protein] + 4 Fe(3+) + 2 hydrogen sulfide + 2 5'-deoxyadenosine + 2 L-methionine + 2 reduced [2Fe-2S]-[ferredoxin]. The protein operates within protein modification; protein lipoylation via endogenous pathway; protein N(6)-(lipoyl)lysine from octanoyl-[acyl-carrier-protein]: step 2/2. In terms of biological role, catalyzes the radical-mediated insertion of two sulfur atoms into the C-6 and C-8 positions of the octanoyl moiety bound to the lipoyl domains of lipoate-dependent enzymes, thereby converting the octanoylated domains into lipoylated derivatives. This is Lipoyl synthase from Rickettsia typhi (strain ATCC VR-144 / Wilmington).